A 181-amino-acid polypeptide reads, in one-letter code: MFTMVNGFRNYSEQAIQAARYIGQGFMVTLDHMNRLPMTIQYPYEKLIPSERFRGRIHFEFDKCIACEVCVRVCPINLPVVDWELKKDVKKKQLKSYSIDFGVCIFCGNCVEYCPTNCLSMTEEYELSIYDRHDLNYDQIALGRLPISVIEDSTIKTISNLSYLSKGSIEGHSNSRNVTNF.

2 4Fe-4S ferredoxin-type domains span residues 55–84 (GRIH…VDWE) and 95–124 (KSYS…MTEE). [4Fe-4S] cluster-binding residues include Cys-64, Cys-67, Cys-70, Cys-74, Cys-104, Cys-107, Cys-110, and Cys-114.

This sequence belongs to the complex I 23 kDa subunit family. In terms of assembly, NDH is composed of at least 16 different subunits, 5 of which are encoded in the nucleus. Requires [4Fe-4S] cluster as cofactor.

It localises to the plastid. It is found in the chloroplast thylakoid membrane. The catalysed reaction is a plastoquinone + NADH + (n+1) H(+)(in) = a plastoquinol + NAD(+) + n H(+)(out). It catalyses the reaction a plastoquinone + NADPH + (n+1) H(+)(in) = a plastoquinol + NADP(+) + n H(+)(out). NDH shuttles electrons from NAD(P)H:plastoquinone, via FMN and iron-sulfur (Fe-S) centers, to quinones in the photosynthetic chain and possibly in a chloroplast respiratory chain. The immediate electron acceptor for the enzyme in this species is believed to be plastoquinone. Couples the redox reaction to proton translocation, and thus conserves the redox energy in a proton gradient. The protein is NAD(P)H-quinone oxidoreductase subunit I, chloroplastic of Physcomitrium patens (Spreading-leaved earth moss).